Consider the following 379-residue polypeptide: Alkanesulfonate monooxygenase (379 aa).

It belongs to the SsuD family.

It catalyses the reaction an alkanesulfonate + FMNH2 + O2 = an aldehyde + FMN + sulfite + H2O + 2 H(+). In terms of biological role, catalyzes the desulfonation of aliphatic sulfonates. This Pseudomonas syringae pv. tomato (strain ATCC BAA-871 / DC3000) protein is Alkanesulfonate monooxygenase.